Here is a 125-residue protein sequence, read N- to C-terminus: Small ribosomal subunit protein uS12 (125 aa).

Positions 1-26 (MPTINQLVRKSRKTVKAQSDSPALKN) are disordered. Asp-89 carries the 3-methylthioaspartic acid modification.

The protein belongs to the universal ribosomal protein uS12 family. In terms of assembly, part of the 30S ribosomal subunit. Contacts proteins S8 and S17. May interact with IF1 in the 30S initiation complex.

With S4 and S5 plays an important role in translational accuracy. Functionally, interacts with and stabilizes bases of the 16S rRNA that are involved in tRNA selection in the A site and with the mRNA backbone. Located at the interface of the 30S and 50S subunits, it traverses the body of the 30S subunit contacting proteins on the other side and probably holding the rRNA structure together. The combined cluster of proteins S8, S12 and S17 appears to hold together the shoulder and platform of the 30S subunit. This Clostridium tetani (strain Massachusetts / E88) protein is Small ribosomal subunit protein uS12.